Here is a 197-residue protein sequence, read N- to C-terminus: Transcription factor FapR (197 aa).

Belongs to the FapR family.

In terms of biological role, transcriptional factor involved in regulation of membrane lipid biosynthesis by repressing genes involved in fatty acid and phospholipid metabolism. The chain is Transcription factor FapR from Bacillus anthracis (strain A0248).